We begin with the raw amino-acid sequence, 546 residues long: Thermolysin (546 aa).

An N-terminal signal peptide occupies residues 1–25 (MDKRAMLGAIGLAFGLMAWPFGASA). Positions 26-228 (KEKSMVWNEQ…EAKPGGGQPV (203 aa)) are cleaved as a propeptide — activation peptide. Ca(2+) is bound by residues aspartate 287, aspartate 289, glutamine 291, and aspartate 368. Histidine 372 is a binding site for Zn(2+). Glutamate 373 is a catalytic residue. Zn(2+)-binding residues include histidine 376 and glutamate 396. Ca(2+)-binding residues include asparagine 413, aspartate 415, glutamate 417, glutamate 420, tyrosine 423, threonine 424, isoleucine 427, and aspartate 430. Histidine 461 acts as the Proton donor in catalysis.

This sequence belongs to the peptidase M4 family. The cofactor is Ca(2+). Requires Zn(2+) as cofactor.

The protein localises to the secreted. It catalyses the reaction Preferential cleavage: Xaa-|-Leu &gt; Xaa-|-Phe.. Functionally, extracellular zinc metalloprotease. The protein is Thermolysin (npr) of Bacillus caldolyticus.